A 377-amino-acid polypeptide reads, in one-letter code: Probable protein phosphatase 2C 61 (377 aa).

Positions 30–338 (AAGEFSMAAA…DDITAVVVFL (309 aa)) constitute a PPM-type phosphatase domain. Mn(2+) contacts are provided by Asp-64, Gly-65, Asp-269, and Asp-329.

Belongs to the PP2C family. Mg(2+) serves as cofactor. It depends on Mn(2+) as a cofactor.

The catalysed reaction is O-phospho-L-seryl-[protein] + H2O = L-seryl-[protein] + phosphate. It catalyses the reaction O-phospho-L-threonyl-[protein] + H2O = L-threonyl-[protein] + phosphate. This Oryza sativa subsp. japonica (Rice) protein is Probable protein phosphatase 2C 61.